The chain runs to 206 residues: LexA repressor (206 aa).

Positions 28-48 (VREIGEAVGLASSSTVHGHLS) form a DNA-binding region, H-T-H motif. Active-site for autocatalytic cleavage activity residues include Ser129 and Lys167.

It belongs to the peptidase S24 family. Homodimer.

It catalyses the reaction Hydrolysis of Ala-|-Gly bond in repressor LexA.. Functionally, represses a number of genes involved in the response to DNA damage (SOS response), including recA and lexA. In the presence of single-stranded DNA, RecA interacts with LexA causing an autocatalytic cleavage which disrupts the DNA-binding part of LexA, leading to derepression of the SOS regulon and eventually DNA repair. The chain is LexA repressor from Staphylococcus epidermidis (strain ATCC 35984 / DSM 28319 / BCRC 17069 / CCUG 31568 / BM 3577 / RP62A).